We begin with the raw amino-acid sequence, 461 residues long: Acetylcholine receptor subunit alpha (461 aa).

The N-terminal stretch at 1 to 24 (MILCSYWHVGLVLLLFSCCGLVLG) is a signal peptide. Topologically, residues 25 to 234 (SEHETRLVAN…ITYHFIMQRI (210 aa)) are extracellular. 2 cysteine pairs are disulfide-bonded: Cys152/Cys166 and Cys216/Cys217. A glycan (N-linked (GlcNAc...) asparagine) is linked at Asn165. 3 helical membrane-spanning segments follow: residues 235-259 (PLYF…VFYL), 267-285 (MTLS…LVIV), and 301-320 (YMLF…VVVI). Residues 321 to 432 (NTHHRSPSTH…WKYVAMVIDH (112 aa)) lie on the Cytoplasmic side of the membrane. Residues 433-451 (ILLCVFMLICIIGTVSVFA) form a helical membrane-spanning segment.

The protein belongs to the ligand-gated ion channel (TC 1.A.9) family. Acetylcholine receptor (TC 1.A.9.1) subfamily. Alpha-1/CHRNA1 sub-subfamily. In terms of assembly, pentamer of two alpha chains, and one each of the beta, delta, and gamma chains.

It localises to the postsynaptic cell membrane. The protein localises to the cell membrane. The catalysed reaction is K(+)(in) = K(+)(out). It carries out the reaction Na(+)(in) = Na(+)(out). Its function is as follows. Upon acetylcholine binding, the AChR responds by an extensive change in conformation that affects all subunits and leads to opening of an ion-conducting channel across the plasma membrane. This Tetronarce californica (Pacific electric ray) protein is Acetylcholine receptor subunit alpha (CHRNA1).